We begin with the raw amino-acid sequence, 258 residues long: Neurotrophin-3 (258 aa).

The first 18 residues, 1–18 (MSILFYVIFLAYLRGIQG), serve as a signal peptide directing secretion. A propeptide spanning residues 19–139 (NSMDQRSLPE…ANRTSPRRKR (121 aa)) is cleaved from the precursor. The segment at 60–85 (QSTLPKAEAPREPEQGEATRSEFQPM) is disordered. Positions 67-79 (EAPREPEQGEATR) are enriched in basic and acidic residues. N-linked (GlcNAc...) asparagine glycosylation is present at asparagine 131. Cystine bridges form between cysteine 153-cysteine 218, cysteine 196-cysteine 247, and cysteine 206-cysteine 249.

This sequence belongs to the NGF-beta family. As to expression, brain and peripheral tissues.

It localises to the secreted. In terms of biological role, seems to promote the survival of visceral and proprioceptive sensory neurons. The sequence is that of Neurotrophin-3 (Ntf3) from Mus musculus (Mouse).